Reading from the N-terminus, the 409-residue chain is Immediate early response gene 5-like protein (409 aa).

Disordered regions lie at residues 168–237 (QPPH…PSSS) and 312–335 (GQEE…GGTP). The segment covering 184–195 (QPGPAPLPPPAP) has biased composition (pro residues). 2 stretches are compositionally biased toward low complexity: residues 196–212 (AALC…CSAP) and 220–237 (PPTV…PSSS). The segment covering 313-324 (QEEEDDEEEDAG) has biased composition (acidic residues).

This sequence belongs to the IER family.

The sequence is that of Immediate early response gene 5-like protein (Ier5l) from Rattus norvegicus (Rat).